Reading from the N-terminus, the 174-residue chain is UPF0398 protein YfdB (174 aa).

The protein belongs to the UPF0398 family.

This Lactococcus lactis subsp. lactis (strain IL1403) (Streptococcus lactis) protein is UPF0398 protein YfdB (yfdB).